The sequence spans 1403 residues: DNA-directed RNA polymerase subunit beta' (1403 aa).

4 residues coordinate Zn(2+): C71, C73, C86, and C89. 3 residues coordinate Mg(2+): D462, D464, and D466. The Zn(2+) site is built by C820, C893, C900, and C903.

This sequence belongs to the RNA polymerase beta' chain family. As to quaternary structure, the RNAP catalytic core consists of 2 alpha, 1 beta, 1 beta' and 1 omega subunit. When a sigma factor is associated with the core the holoenzyme is formed, which can initiate transcription. Mg(2+) is required as a cofactor. The cofactor is Zn(2+).

The catalysed reaction is RNA(n) + a ribonucleoside 5'-triphosphate = RNA(n+1) + diphosphate. Functionally, DNA-dependent RNA polymerase catalyzes the transcription of DNA into RNA using the four ribonucleoside triphosphates as substrates. The chain is DNA-directed RNA polymerase subunit beta' from Methylobacterium radiotolerans (strain ATCC 27329 / DSM 1819 / JCM 2831 / NBRC 15690 / NCIMB 10815 / 0-1).